The sequence spans 425 residues: Histone-binding protein RBBP4 (425 aa).

A2 carries the post-translational modification N-acetylalanine. 7 WD repeats span residues 32 to 125 (YDLV…NHEG), 126 to 175 (EVNR…RLRG), 176 to 223 (HQKE…KTIF), 225 to 270 (GHTA…HSVD), 271 to 314 (AHTA…HSFE), 315 to 371 (SHKD…FIHG), and 372 to 404 (GHTA…VWQM).

This sequence belongs to the WD repeat RBAP46/RBAP48/MSI1 family. In terms of assembly, binds directly to histone H4, probably via helix 1 of the histone fold, a region that is not accessible when histone H4 is in chromatin. Forms a large corepressor complex that contains ncor1, sin3a and possibly sin3b, histone deacetylases hdac2, hdac1, rbbp4 and possibly rbbp7.

It is found in the nucleus. The protein resides in the chromosome. Its subcellular location is the telomere. Functionally, core histone-binding subunit that may target chromatin assembly factors, chromatin remodeling factors and histone deacetylases to their histone substrates in a manner that is regulated by nucleosomal DNA. Component of several complexes which regulate chromatin metabolism. The protein is Histone-binding protein RBBP4 (rbbp4) of Xenopus tropicalis (Western clawed frog).